An 80-amino-acid chain; its full sequence is Defensin-like protein 51 (80 aa).

The N-terminal stretch at 1–27 is a signal peptide; that stretch reads MGFTKILVTFFLVGLLVISSSPQNAIA. 4 disulfide bridges follow: Cys-39/Cys-79, Cys-43/Cys-66, Cys-52/Cys-77, and Cys-56/Cys-78.

The protein belongs to the DEFL family.

The protein localises to the secreted. This chain is Defensin-like protein 51 (LCR48), found in Arabidopsis thaliana (Mouse-ear cress).